Here is a 179-residue protein sequence, read N- to C-terminus: Adenine phosphoribosyltransferase (179 aa).

It belongs to the purine/pyrimidine phosphoribosyltransferase family. As to quaternary structure, homodimer.

It localises to the cytoplasm. It catalyses the reaction AMP + diphosphate = 5-phospho-alpha-D-ribose 1-diphosphate + adenine. It participates in purine metabolism; AMP biosynthesis via salvage pathway; AMP from adenine: step 1/1. Its function is as follows. Catalyzes a salvage reaction resulting in the formation of AMP, that is energically less costly than de novo synthesis. The chain is Adenine phosphoribosyltransferase from Helicobacter pylori (strain G27).